We begin with the raw amino-acid sequence, 561 residues long: Formate--tetrahydrofolate ligase (561 aa).

Thr66–Thr73 contributes to the ATP binding site.

The protein belongs to the formate--tetrahydrofolate ligase family.

It catalyses the reaction (6S)-5,6,7,8-tetrahydrofolate + formate + ATP = (6R)-10-formyltetrahydrofolate + ADP + phosphate. It participates in one-carbon metabolism; tetrahydrofolate interconversion. In Methylibium petroleiphilum (strain ATCC BAA-1232 / LMG 22953 / PM1), this protein is Formate--tetrahydrofolate ligase.